Consider the following 544-residue polypeptide: MLNCDMLIDSKELKSTISKLKNEDNYTILLDVTAVDYLKFPDVTPSRFAVIYILRDSTFTKEITIKSYVDDNTLEIDSLYDLYESADWAERETFDQYGIKFVGHPNLKRVLNHHQFIGHPLRKDYKITKGQICTETEDLMDEMVPKLKSKGYKKEEIDDLMLLNVGPSHPASHGTIRNFVAMEGETITACVTEIGYLHRGFEKACEHHTYSQIIPYTDRLNYCSAILNNIGYSKAVEEMLGIEITPRAKMIRVIIGELSRILDHLVCNAANMVDLGGLTNFWYLFSPRDMAYDLLSKLTGARLTNTYTRIGGLEFDLYDGFDKDLEEVLKAVEKGVEDALSLIAHNRIYHDRTQDVGVIKADFALRNGISGPNLRAAGVACDLRKDKPYYGYENFDFDVVIGSHGDVYDRMMCRFEEMRQSTKIIRQAMKNLPDGAINVYAPGVILPSKKDVYGNIEGLMNQFKLTFEGIQVPKGEYYSFSEAANGELGFFIVSDGSGRPYKVKCRPPCFYSLAAYSKIVEGTMLADAVVTMASMNFIAGEFDR.

Positions Met-1 to Asp-138 are NADH dehydrogenase I subunit C. The interval Met-161–Arg-544 is NADH dehydrogenase I subunit D.

This sequence in the N-terminal section; belongs to the complex I 30 kDa subunit family. The protein in the C-terminal section; belongs to the complex I 49 kDa subunit family. As to quaternary structure, NDH-1 is composed of 13 different subunits. Subunits NuoB, CD, E, F, and G constitute the peripheral sector of the complex.

The protein localises to the cell inner membrane. It carries out the reaction a quinone + NADH + 5 H(+)(in) = a quinol + NAD(+) + 4 H(+)(out). Functionally, NDH-1 shuttles electrons from NADH, via FMN and iron-sulfur (Fe-S) centers, to quinones in the respiratory chain. The immediate electron acceptor for the enzyme in this species is believed to be ubiquinone. Couples the redox reaction to proton translocation (for every two electrons transferred, four hydrogen ions are translocated across the cytoplasmic membrane), and thus conserves the redox energy in a proton gradient. This chain is NADH-quinone oxidoreductase subunit C/D, found in Aliarcobacter butzleri (strain RM4018) (Arcobacter butzleri).